Reading from the N-terminus, the 325-residue chain is 4-hydroxy-3-methylbut-2-enyl diphosphate reductase (325 aa).

Position 21 (Cys-21) interacts with [4Fe-4S] cluster. 2 residues coordinate (2E)-4-hydroxy-3-methylbut-2-enyl diphosphate: His-50 and His-83. His-50 and His-83 together coordinate dimethylallyl diphosphate. Residues His-50 and His-83 each contribute to the isopentenyl diphosphate site. Position 105 (Cys-105) interacts with [4Fe-4S] cluster. His-133 lines the (2E)-4-hydroxy-3-methylbut-2-enyl diphosphate pocket. Residue His-133 participates in dimethylallyl diphosphate binding. His-133 provides a ligand contact to isopentenyl diphosphate. The Proton donor role is filled by Glu-135. Residue Thr-173 participates in (2E)-4-hydroxy-3-methylbut-2-enyl diphosphate binding. [4Fe-4S] cluster is bound at residue Cys-203. (2E)-4-hydroxy-3-methylbut-2-enyl diphosphate is bound by residues Ser-231, Ser-232, Asn-233, and Ser-275. Dimethylallyl diphosphate contacts are provided by Ser-231, Ser-232, Asn-233, and Ser-275. The isopentenyl diphosphate site is built by Ser-231, Ser-232, Asn-233, and Ser-275.

Belongs to the IspH family. The cofactor is [4Fe-4S] cluster.

The catalysed reaction is isopentenyl diphosphate + 2 oxidized [2Fe-2S]-[ferredoxin] + H2O = (2E)-4-hydroxy-3-methylbut-2-enyl diphosphate + 2 reduced [2Fe-2S]-[ferredoxin] + 2 H(+). It catalyses the reaction dimethylallyl diphosphate + 2 oxidized [2Fe-2S]-[ferredoxin] + H2O = (2E)-4-hydroxy-3-methylbut-2-enyl diphosphate + 2 reduced [2Fe-2S]-[ferredoxin] + 2 H(+). The protein operates within isoprenoid biosynthesis; dimethylallyl diphosphate biosynthesis; dimethylallyl diphosphate from (2E)-4-hydroxy-3-methylbutenyl diphosphate: step 1/1. It functions in the pathway isoprenoid biosynthesis; isopentenyl diphosphate biosynthesis via DXP pathway; isopentenyl diphosphate from 1-deoxy-D-xylulose 5-phosphate: step 6/6. Catalyzes the conversion of 1-hydroxy-2-methyl-2-(E)-butenyl 4-diphosphate (HMBPP) into a mixture of isopentenyl diphosphate (IPP) and dimethylallyl diphosphate (DMAPP). Acts in the terminal step of the DOXP/MEP pathway for isoprenoid precursor biosynthesis. The polypeptide is 4-hydroxy-3-methylbut-2-enyl diphosphate reductase (Bordetella pertussis (strain Tohama I / ATCC BAA-589 / NCTC 13251)).